Reading from the N-terminus, the 189-residue chain is Protein jagunal homolog (189 aa).

The Cytoplasmic segment spans residues 1–34 (MSSRGVRAAGTDGTDFQNRQRVAQHYQESAQYKS). A helical transmembrane segment spans residues 35–55 (ILKWFFVPHFLILVFMWLKVG). Residues 56–78 (SELLRTNFGWKNAFFDRLDMPSA) are Lumenal-facing. A helical transmembrane segment spans residues 79-99 (YPWEYVWCFSFIPIVLAIYSF). The Cytoplasmic portion of the chain corresponds to 100-105 (QRNKLK). Residues 106–126 (ILHYAYYAEFVVGIFPCMIGL) traverse the membrane as a helical segment. The Lumenal portion of the chain corresponds to 127–150 (GGQLPELMEYAQDMEGSNTPTFKG). A helical transmembrane segment spans residues 151–171 (IFPMVIIWYIFFAVALQIHGF). The Cytoplasmic segment spans residues 172 to 189 (SMYFMHHLAAAWAPVKRD).

This sequence belongs to the jagunal family.

It localises to the endoplasmic reticulum membrane. In Caenorhabditis elegans, this protein is Protein jagunal homolog.